The chain runs to 247 residues: Ribose-5-phosphate isomerase (247 aa).

This sequence belongs to the ribose 5-phosphate isomerase family.

The protein localises to the cytoplasm. It catalyses the reaction aldehydo-D-ribose 5-phosphate = D-ribulose 5-phosphate. It participates in carbohydrate degradation; pentose phosphate pathway; D-ribose 5-phosphate from D-ribulose 5-phosphate (non-oxidative stage): step 1/1. The chain is Ribose-5-phosphate isomerase (RKI1) from Meyerozyma guilliermondii (strain ATCC 6260 / CBS 566 / DSM 6381 / JCM 1539 / NBRC 10279 / NRRL Y-324) (Yeast).